Reading from the N-terminus, the 263-residue chain is 3'-5' ssDNA/RNA exonuclease TatD (263 aa).

Residues glutamate 91, histidine 127, and histidine 152 each coordinate a divalent metal cation.

This sequence belongs to the metallo-dependent hydrolases superfamily. TatD-type hydrolase family. TatD subfamily. In terms of assembly, monomer. The cofactor is Mg(2+).

It is found in the cytoplasm. 3'-5' exonuclease that prefers single-stranded DNA and RNA. May play a role in the H(2)O(2)-induced DNA damage repair. This chain is 3'-5' ssDNA/RNA exonuclease TatD, found in Cronobacter turicensis (strain DSM 18703 / CCUG 55852 / LMG 23827 / z3032).